A 231-amino-acid polypeptide reads, in one-letter code: Casparian strip membrane protein 1 (231 aa).

Topologically, residues 1-69 are cytoplasmic; that stretch reads MSTSETATVI…FRQSDRGSRC (69 aa). Residues 70–90 traverse the membrane as a helical segment; that stretch reads LAFLDFLLRIAAFGPALAAAI. Over 91 to 117 the chain is Extracellular; it reads ATGTSDETLSVFTEFFQFRARFDDFPA. Residues 118-138 traverse the membrane as a helical segment; it reads FLFLMVANAIAAGYLVLSLPF. The Cytoplasmic segment spans residues 139–152; sequence SAVVVLRPQATGLR. A helical transmembrane segment spans residues 153 to 173; the sequence is LLLLVCDTIMIGLLTAAAAAA. Topologically, residues 174-207 are extracellular; that stretch reads AAIVELAHNGNERANWVAICMQFHGFCQRTSGAV. Residues 208–228 traverse the membrane as a helical segment; sequence VASFLSVFLFLLLVVLAAFAI. At 229 to 231 the chain is on the cytoplasmic side; sequence RKR.

Belongs to the Casparian strip membrane proteins (CASP) family. As to quaternary structure, homodimer and heterodimers.

The protein localises to the cell membrane. Regulates membrane-cell wall junctions and localized cell wall deposition. Required for establishment of the Casparian strip membrane domain (CSD) and the subsequent formation of Casparian strips, a cell wall modification of the root endodermis that determines an apoplastic barrier between the intraorganismal apoplasm and the extraorganismal apoplasm and prevents lateral diffusion. In Brachypodium distachyon (Purple false brome), this protein is Casparian strip membrane protein 1.